The chain runs to 373 residues: MGYLFQETLSSNPKTPIVVDDDNELGLMAVRLANAAAFPMVLKAALELGVFDTLYAAASRTDSFLSPYEIASKLPTTPRNPEAPVLLDRMLRLLASYSMVKCGKALSGKGERVYRAEPICRFFLKDNIQDIGSLASQVIVNFDSVFLNTWAQLKDVVLEGGDAFGRAHGGMKLFDYMGTDERFSKLFNQTGFTIAVVKKALEVYEGFKGVKVLVDVGGGVGNTLGVVTSKYPNIKGINFDLTCALAQAPSYPGVEHVAGDMFVDVPTGDAMILKRILHDWTDEDCVKILKNCWKSLPENGKVVVIELVTPDEAENGDINANIAFDMDMLMFTQCSGGKERSRAEFEALAAASGFTHCKFVCQAYHCWIIEFCK.

S-adenosyl-L-homocysteine-binding residues include G217, D240, D260, M261, and K274. Catalysis depends on H278, which acts as the Proton acceptor.

Belongs to the class I-like SAM-binding methyltransferase superfamily. Cation-independent O-methyltransferase family. Interacts with B'GAMMA.

It participates in secondary metabolite biosynthesis. Its function is as follows. Involved in indole glucosinolate biosynthesis. Catalyzes methoxylation reactions of the glucosinolate indole ring. Converts the hydroxy intermediates 4-hydroxy-indol-3-yl-methylglucosinolate (4OH-I3M) and 1-hydroxy-indol-3-yl-methylglucosinolate (1OH-I3M) to 4-methoxy-indol-3-yl-methylglucosinolate (4MO-I3M) and 1-methoxy-indol-3-yl-methylglucosinolate (1MO-I3M), respectively. This chain is Indole glucosinolate O-methyltransferase 1, found in Arabidopsis thaliana (Mouse-ear cress).